Here is a 304-residue protein sequence, read N- to C-terminus: MSVLNTRTLTLDRHAAARRLHAFYVLTKPRVNTLIVFCAVIGMFLAVPDGLPDPKSVVAATLGIAFVAGAAAAMNCLIEAHIDARMARTRHRPLPRGELAPAETLLFAGVLGGTGLTVLYHWVNPLTMWLTLATFVGYAVVYTVLLKPRTPQNIVIGGASGAMPPVLGWAAVTGEVSADALLLFLIIFAWTPPHFWALALYRSADYARAGLPMLPVTHGPEFTRLSVLLYTCILFGVTLLPFATRMSGPLYLVCAVALGIGFLRHAWRLYADYSDAFARRTFRFSILYLFLLFAALLMDHYLPL.

The next 9 membrane-spanning stretches (helical) occupy residues 31–51 (VNTL…PDGL), 58–78 (VAAT…NCLI), 99–119 (LAPA…LTVL), 126–146 (LTMW…TVLL), 154–174 (IVIG…AVTG), 180–200 (ALLL…ALAL), 222–242 (FTRL…LLPF), 243–263 (ATRM…IGFL), and 284–304 (FSIL…YLPL).

This sequence belongs to the UbiA prenyltransferase family. Protoheme IX farnesyltransferase subfamily.

Its subcellular location is the cell inner membrane. It carries out the reaction heme b + (2E,6E)-farnesyl diphosphate + H2O = Fe(II)-heme o + diphosphate. The protein operates within porphyrin-containing compound metabolism; heme O biosynthesis; heme O from protoheme: step 1/1. Functionally, converts heme B (protoheme IX) to heme O by substitution of the vinyl group on carbon 2 of heme B porphyrin ring with a hydroxyethyl farnesyl side group. The polypeptide is Protoheme IX farnesyltransferase (Aromatoleum aromaticum (strain DSM 19018 / LMG 30748 / EbN1) (Azoarcus sp. (strain EbN1))).